Here is a 400-residue protein sequence, read N- to C-terminus: Na(+)/H(+) antiporter NhaA (400 aa).

Helical transmembrane passes span 9–29 (FLVS…IAMV), 60–80 (LILW…GLEL), 96–116 (VLPA…FYLF), 127–147 (WAIP…ILGA), 155–175 (IFLV…MAIF), 180–200 (LSLI…ALNL), 210–230 (LILG…ATLA), 263–283 (YFVL…GIGL), 294–314 (VILG…FVAI), 327–347 (WISF…SLFI), and 366–386 (VLIA…IASV).

This sequence belongs to the NhaA Na(+)/H(+) (TC 2.A.33) antiporter family.

It localises to the cell inner membrane. It carries out the reaction Na(+)(in) + 2 H(+)(out) = Na(+)(out) + 2 H(+)(in). Its function is as follows. Na(+)/H(+) antiporter that extrudes sodium in exchange for external protons. The sequence is that of Na(+)/H(+) antiporter NhaA from Campylobacter curvus (strain 525.92).